The chain runs to 150 residues: Large ribosomal subunit protein bL9 (150 aa).

Belongs to the bacterial ribosomal protein bL9 family.

In terms of biological role, binds to the 23S rRNA. The protein is Large ribosomal subunit protein bL9 of Shewanella denitrificans (strain OS217 / ATCC BAA-1090 / DSM 15013).